The chain runs to 262 residues: Probable carboxylesterase Culp3 (262 aa).

A signal peptide spans 1–41 (MNNRPIRLLTSGRAGLGAGALITAVVLLIALGAVWTLVAFA). Cys44 and Cys114 are disulfide-bonded. The active-site Nucleophile is Ser125. Cys188 and Cys195 form a disulfide bridge. Residue Asp192 is part of the active site. Catalysis depends on His206, which acts as the Proton donor/acceptor. Residues 241–262 (LPGSVLQMPGTAAPAPESLHGR) are disordered.

Belongs to the cutinase family.

Its subcellular location is the secreted. The protein is Probable carboxylesterase Culp3 (cut3) of Mycobacterium tuberculosis (strain CDC 1551 / Oshkosh).